The sequence spans 509 residues: uncharacterized protein (509 aa).

Positions 358–480 (RRIVIIDAIS…IIPFIVENGE (123 aa)) constitute an RNase NYN domain.

This is an uncharacterized protein from Methanocaldococcus jannaschii (strain ATCC 43067 / DSM 2661 / JAL-1 / JCM 10045 / NBRC 100440) (Methanococcus jannaschii).